An 86-amino-acid polypeptide reads, in one-letter code: Gas vesicle protein A1 (86 aa).

It belongs to the gas vesicle GvpA family. As to quaternary structure, the gas vesicle shell is 2 nm thick and consists of a single layer of this protein. It forms helical ribs nearly perpendicular to the long axis of the vesicle.

It localises to the gas vesicle shell. Gas vesicles are hollow, gas filled proteinaceous nanostructures found in some microorganisms. During planktonic growth they allow positioning of the organism at a favorable depth for light or nutrient acquisition. GvpA forms the protein shell. Its function is as follows. It is not clear if the 2 type A proteins in this organism are functionally redundant. In terms of biological role, when the full gvp locus (gvpA1-gvpP-gvpQ-gvpA2-gvpR-gvpN-gvpF-gvpG-gvpL-gvpS-gvpK-gvpJ-gvpT-gvpU, called pNL26) is expressed in E.coli gas vesicles are made. In Priestia megaterium (Bacillus megaterium), this protein is Gas vesicle protein A1.